The primary structure comprises 599 residues: Sulfite reductase [NADPH] flavoprotein alpha-component (599 aa).

Residues 63-201 (ITVISASQTG…LATAWRKQVV (139 aa)) enclose the Flavodoxin-like domain. FMN-binding positions include 69–74 (SQTGNA), 116–119 (STQG), and 152–161 (LGDTSYENFC). An FAD-binding FR-type domain is found at 234 to 448 (EQPLTAQLAV…IEHNDNFRLP (215 aa)). Residues threonine 322, histidine 356, 386–389 (RLYS), 404–406 (TVG), tyrosine 410, and 419–422 (GGAS) contribute to the FAD site. NADP(+) contacts are provided by residues 519–520 (SR), 525–529 (KVYVQ), and aspartate 561. FAD is bound at residue tyrosine 599.

The protein belongs to the NADPH-dependent sulphite reductase flavoprotein subunit CysJ family. This sequence in the N-terminal section; belongs to the flavodoxin family. In the C-terminal section; belongs to the flavoprotein pyridine nucleotide cytochrome reductase family. As to quaternary structure, alpha(8)-beta(8). The alpha component is a flavoprotein, the beta component is a hemoprotein. Requires FAD as cofactor. It depends on FMN as a cofactor.

The catalysed reaction is hydrogen sulfide + 3 NADP(+) + 3 H2O = sulfite + 3 NADPH + 4 H(+). It participates in sulfur metabolism; hydrogen sulfide biosynthesis; hydrogen sulfide from sulfite (NADPH route): step 1/1. In terms of biological role, component of the sulfite reductase complex that catalyzes the 6-electron reduction of sulfite to sulfide. This is one of several activities required for the biosynthesis of L-cysteine from sulfate. The flavoprotein component catalyzes the electron flow from NADPH -&gt; FAD -&gt; FMN to the hemoprotein component. This Serratia proteamaculans (strain 568) protein is Sulfite reductase [NADPH] flavoprotein alpha-component.